The primary structure comprises 92 residues: Small ribosomal subunit protein uS19c (92 aa).

This sequence belongs to the universal ribosomal protein uS19 family.

It is found in the plastid. The protein localises to the chloroplast. Protein S19 forms a complex with S13 that binds strongly to the 16S ribosomal RNA. The chain is Small ribosomal subunit protein uS19c (rps19) from Anthoceros angustus (Hornwort).